A 213-amino-acid polypeptide reads, in one-letter code: Large ribosomal subunit protein uL3 (213 aa).

Gln151 is modified (N5-methylglutamine).

The protein belongs to the universal ribosomal protein uL3 family. Part of the 50S ribosomal subunit. Forms a cluster with proteins L14 and L19. Methylated by PrmB.

Functionally, one of the primary rRNA binding proteins, it binds directly near the 3'-end of the 23S rRNA, where it nucleates assembly of the 50S subunit. In Rhizobium leguminosarum bv. trifolii (strain WSM2304), this protein is Large ribosomal subunit protein uL3.